Reading from the N-terminus, the 638-residue chain is Growth hormone receptor (638 aa).

A signal peptide spans 1-18 (MDLWQLLLTLALAGSSDA). The Extracellular portion of the chain corresponds to 19 to 264 (FSGSEATAAI…SQFTCEEDFY (246 aa)). N-linked (GlcNAc...) asparagine glycosylation is present at N46. 2 disulfides stabilise this stretch: C56/C66 and C101/C112. N115 is a glycosylation site (N-linked (GlcNAc...) asparagine). A disulfide bridge links C126 with C140. Residues 151–254 (PPIALNWTLL…EVLYVTLPQM (104 aa)) form the Fibronectin type-III domain. Residues N156, N161, and N200 are each glycosylated (N-linked (GlcNAc...) asparagine). Positions 240–244 (YGEFS) match the WSXWS motif motif. Residues 260–262 (EED) form a required for ADAM17-mediated proteolysis region. Residues 265 to 288 (FPWLLIIIFGIFGLTVMLFVFLFS) traverse the membrane as a helical segment. Residues 289 to 638 (KQQRIKMLIL…STDQLNKIMP (350 aa)) are Cytoplasmic-facing. Residues 294-379 (KMLILPPVPV…HEKSHSNLGV (86 aa)) are required for JAK2 binding. The Box 1 motif motif lies at 297–305 (ILPPVPVPK). Residues 340–349 (DSWVEFIELD) carry the UbE motif motif. The residue at position 341 (S341) is a Phosphoserine. The disordered stretch occupies residues 353 to 391 (PDEKTEESDTDRLLSSDHEKSHSNLGVKDGDSGRTSCCE). Residues 362–384 (TDRLLSSDHEKSHSNLGVKDGDS) are compositionally biased toward basic and acidic residues. Phosphotyrosine; by JAK2 occurs at positions 487 and 595.

This sequence belongs to the type I cytokine receptor family. Type 1 subfamily. As to quaternary structure, on growth hormone (GH) binding, forms homodimers and binds JAK2 via a box 1-containing domain. The soluble form (GHBP) is produced by phorbol ester-promoted proteolytic cleavage at the cell surface (shedding) by ADAM17/TACE. Shedding is inhibited by growth hormone (GH) binding to the receptor probably due to a conformational change in GHR rendering the receptor inaccessible to ADAM17. In terms of processing, on GH binding, phosphorylated on tyrosine residues in the cytoplasmic domain by JAK2. Post-translationally, ubiquitinated by the ECS(SOCS2) complex following ligand-binding and phosphorylation by JAK2, leading to its degradation by the proteasome. Regulation by the ECS(SOCS2) complex acts as a negative feedback loop of growth hormone receptor signaling. Ubiquitination is not sufficient for GHR internalization. As to expression, expressed in various tissues with high expression in liver and skeletal muscle. In terms of tissue distribution, isoform 2 is expressed in lung, stomach and muscle. Predominantly expressed in kidney, bladder, adrenal gland and brain stem. Highly expressed in placental villi.

It localises to the cell membrane. The protein localises to the secreted. Its function is as follows. Receptor for pituitary gland growth hormone (GH1) involved in regulating postnatal body growth. On ligand binding, couples to the JAK2/STAT5 pathway. In terms of biological role, the soluble form (GHBP) acts as a reservoir of growth hormone in plasma and may be a modulator/inhibitor of GH signaling. Up-regulates the production of the soluble Growth hormone-binding protein form (GHBP) and acts as a negative inhibitor of growth hormone signaling. This chain is Growth hormone receptor (GHR), found in Homo sapiens (Human).